The primary structure comprises 393 residues: Formate-dependent phosphoribosylglycinamide formyltransferase (393 aa).

N(1)-(5-phospho-beta-D-ribosyl)glycinamide-binding positions include 22–23 (EL) and Glu-82. ATP is bound by residues Arg-114, Lys-155, 160 to 165 (SSGKGQ), 195 to 198 (EGFI), and Glu-203. One can recognise an ATP-grasp domain in the interval 119-308 (RLAAEELDLP…QFALHARAIL (190 aa)). Glu-267 and Glu-279 together coordinate Mg(2+). Residues Asp-286, Lys-356, and 363–364 (RR) contribute to the N(1)-(5-phospho-beta-D-ribosyl)glycinamide site.

This sequence belongs to the PurK/PurT family. In terms of assembly, homodimer.

It carries out the reaction N(1)-(5-phospho-beta-D-ribosyl)glycinamide + formate + ATP = N(2)-formyl-N(1)-(5-phospho-beta-D-ribosyl)glycinamide + ADP + phosphate + H(+). Its pathway is purine metabolism; IMP biosynthesis via de novo pathway; N(2)-formyl-N(1)-(5-phospho-D-ribosyl)glycinamide from N(1)-(5-phospho-D-ribosyl)glycinamide (formate route): step 1/1. Its function is as follows. Involved in the de novo purine biosynthesis. Catalyzes the transfer of formate to 5-phospho-ribosyl-glycinamide (GAR), producing 5-phospho-ribosyl-N-formylglycinamide (FGAR). Formate is provided by PurU via hydrolysis of 10-formyl-tetrahydrofolate. The polypeptide is Formate-dependent phosphoribosylglycinamide formyltransferase (Pseudomonas putida (strain GB-1)).